Consider the following 218-residue polypeptide: GTP cyclohydrolase 1 (218 aa).

Zn(2+) contacts are provided by Cys109, His112, and Cys180.

The protein belongs to the GTP cyclohydrolase I family. Toroid-shaped homodecamer, composed of two pentamers of five dimers.

It carries out the reaction GTP + H2O = 7,8-dihydroneopterin 3'-triphosphate + formate + H(+). Its pathway is cofactor biosynthesis; 7,8-dihydroneopterin triphosphate biosynthesis; 7,8-dihydroneopterin triphosphate from GTP: step 1/1. This is GTP cyclohydrolase 1 (folE) from Pasteurella multocida (strain Pm70).